Consider the following 473-residue polypeptide: Argininosuccinate lyase (473 aa).

This sequence belongs to the lyase 1 family. Argininosuccinate lyase subfamily.

The protein localises to the cytoplasm. It carries out the reaction 2-(N(omega)-L-arginino)succinate = fumarate + L-arginine. It functions in the pathway amino-acid biosynthesis; L-arginine biosynthesis; L-arginine from L-ornithine and carbamoyl phosphate: step 3/3. The chain is Argininosuccinate lyase from Mycobacteroides abscessus (strain ATCC 19977 / DSM 44196 / CCUG 20993 / CIP 104536 / JCM 13569 / NCTC 13031 / TMC 1543 / L948) (Mycobacterium abscessus).